Here is a 341-residue protein sequence, read N- to C-terminus: Biotin synthase (341 aa).

In terms of domain architecture, Radical SAM core spans 39 to 263 (EQVQLCTLLS…VAVARITMPL (225 aa)). [4Fe-4S] cluster is bound by residues Cys-54, Cys-58, and Cys-61. The [2Fe-2S] cluster site is built by Cys-98, Cys-129, Cys-189, and Arg-267.

Belongs to the radical SAM superfamily. Biotin synthase family. As to quaternary structure, homodimer. [4Fe-4S] cluster serves as cofactor. It depends on [2Fe-2S] cluster as a cofactor.

It carries out the reaction (4R,5S)-dethiobiotin + (sulfur carrier)-SH + 2 reduced [2Fe-2S]-[ferredoxin] + 2 S-adenosyl-L-methionine = (sulfur carrier)-H + biotin + 2 5'-deoxyadenosine + 2 L-methionine + 2 oxidized [2Fe-2S]-[ferredoxin]. It participates in cofactor biosynthesis; biotin biosynthesis; biotin from 7,8-diaminononanoate: step 2/2. Its function is as follows. Catalyzes the conversion of dethiobiotin (DTB) to biotin by the insertion of a sulfur atom into dethiobiotin via a radical-based mechanism. This is Biotin synthase from Erythrobacter litoralis (strain HTCC2594).